Consider the following 243-residue polypeptide: Ras-related protein Rab-12 (243 aa).

Methionine 1 is modified (N-acetylmethionine). Residues 1-36 (MDPSAALHRRPAGGGLGAVSPALSGGQARRRKQPPR) are disordered. Phosphoserine is present on residues serine 20 and serine 24. Residues glycine 51, valine 52, glycine 53, lysine 54, threonine 55, serine 72, and threonine 73 each coordinate GTP. Threonine 55 contributes to the Mg(2+) binding site. 2 consecutive short sequence motifs (switch) follow at residues 64–78 (DTFCEACKSTVGVDF) and 96–113 (DTAGQERFNSITSAYYRS). Mg(2+) contacts are provided by threonine 73 and aspartate 96. Glycine 99 lines the GTP pocket. Serine 105 is subject to Phosphoserine. Positions 154, 155, 157, 185, 186, and 187 each coordinate GTP. Residues cysteine 242 and cysteine 243 are each lipidated (S-geranylgeranyl cysteine).

Belongs to the small GTPase superfamily. Rab family. As to quaternary structure, interacts with RABIF and OPTN. Interacts with LRRK2; interaction facilitates phosphorylation of Ser-105. Interacts with GDI1, GDI2 and CHM; these interactions are disrupted by phosphorylation on Ser-105. Interacts with RILPL1 and RILPL2; these interactions are dependent on phosphorylation of Ser-105. Requires Mg(2+) as cofactor. Post-translationally, phosphorylation of Ser-105 in the switch II region by LRRK2 prevents the association of RAB regulatory proteins, including CHM and RAB GDP dissociation inhibitors GDI1 and GDI2. Highest levels in skeletal and cardiac muscle. Also found in comparable amounts in brain, spinal cord and lung. Also detected in testis where it is expressed by Sertoli cells of the seminiferous tubules (at protein level).

Its subcellular location is the recycling endosome membrane. It localises to the lysosome membrane. The protein resides in the golgi apparatus membrane. It is found in the cytoplasmic vesicle. The protein localises to the autophagosome. The enzyme catalyses GTP + H2O = GDP + phosphate + H(+). With respect to regulation, regulated by guanine nucleotide exchange factors (GEFs) including DENND3 which promote the exchange of bound GDP for free GTP. Regulated by GTPase activating proteins (GAPs) which increase the GTP hydrolysis activity. Inhibited by GDP dissociation inhibitors (GDIs). Functionally, the small GTPases Rab are key regulators of intracellular membrane trafficking, from the formation of transport vesicles to their fusion with membranes. Rabs cycle between an inactive GDP-bound form and an active GTP-bound form that is able to recruit to membranes different sets of downstream effectors directly responsible for vesicle formation, movement, tethering and fusion. RAB12 may play a role in protein transport from recycling endosomes to lysosomes regulating, for instance, the degradation of the transferrin receptor. Involved in autophagy. This Rattus norvegicus (Rat) protein is Ras-related protein Rab-12.